A 213-amino-acid chain; its full sequence is Uracil phosphoribosyltransferase (213 aa).

5-phospho-alpha-D-ribose 1-diphosphate-binding positions include R78, R103, and 131 to 139 (DPMLATGGT). Uracil is bound by residues I197 and 202–204 (GDA). D203 is a binding site for 5-phospho-alpha-D-ribose 1-diphosphate.

This sequence belongs to the UPRTase family. The cofactor is Mg(2+).

It carries out the reaction UMP + diphosphate = 5-phospho-alpha-D-ribose 1-diphosphate + uracil. The protein operates within pyrimidine metabolism; UMP biosynthesis via salvage pathway; UMP from uracil: step 1/1. Its activity is regulated as follows. Allosterically activated by GTP. Catalyzes the conversion of uracil and 5-phospho-alpha-D-ribose 1-diphosphate (PRPP) to UMP and diphosphate. The chain is Uracil phosphoribosyltransferase from Bifidobacterium animalis subsp. lactis (strain AD011).